We begin with the raw amino-acid sequence, 412 residues long: Mannose-1-phosphate guanylyltransferase regulatory subunit alpha (412 aa).

The segment at 6–259 is substrate-binding domain; it reads TKAIILVGGP…VGFWRQIKNA (254 aa). Residues glutamate 88 and glutamine 255 each contribute to the GDP-alpha-D-mannose site. The interval 281–412 is hexapeptide repeat domain; it reads LKKGNNIIGN…DRNYNNEIIL (132 aa).

Belongs to the transferase hexapeptide repeat family. As to quaternary structure, component of the GMPPA-GMPPB mannose-1-phosphate guanylyltransferase complex composed of 4 gmppA subunits and 8 gmppB subunits; the complex is organized into three layers, a central layer made up of 2 gmppA dimers sandwiched between two layers each made up of 2 gmppB dimers.

In terms of biological role, regulatory subunit of the GMPPA-GMPPB mannose-1-phosphate guanylyltransferase complex; reduces the catalytic activity of GMPPB when part of the complex. Mediates allosteric feedback inhibition of GMPPB catalytic activity upon binding GDP-alpha-D-mannose. Together with GMPPB regulates GDP-alpha-D-mannose levels. This chain is Mannose-1-phosphate guanylyltransferase regulatory subunit alpha (gmppA), found in Dictyostelium discoideum (Social amoeba).